We begin with the raw amino-acid sequence, 529 residues long: MTSSRLWFSLLLAAAFAGRATALWPWPQNFQTSDQRYVLYPNNFQFQYDVSSAAQPGCSVLDEAFQRYRDLLFGSGSWPRPYLTGKRHTLEKNVLVVSVVTPGCNQLPTLESVENYTLTINDDQCLLLSETVWGALRGLETFSQLVWKSAEGTFFINKTEIEDFPRFPHRGLLLDTSRHYLPLSSILDTLDVMAYNKLNVFHWHLVDDPSFPYESFTFPELMRKGSYNPVTHIYTAQDVKEVIEYARLRGIRVLAEFDTPGHTLSWGPGIPGLLTPCYSGSEPSGTFGPVNPSLNNTYEFMSTFFLEVSSVFPDFYLHLGGDEVDFTCWKSNPEIQDFMRKKGFGEDFKQLESFYIQTLLDIVSSYGKGYVVWQEVFDNKVKIQPDTIIQVWREDIPVNYMKELELVTKAGFRALLSAPWYLNRISYGPDWKDFYIVEPLAFEGTPEQKALVIGGEACMWGEYVDNTNLVPRLWPRAGAVAERLWSNKLTSDLTFAYERLSHFRCELLRRGVQAQPLNVGFCEQEFEQT.

The N-terminal stretch at 1-22 (MTSSRLWFSLLLAAAFAGRATA) is a signal peptide. A propeptide spanning residues 23–88 (LWPWPQNFQT…PRPYLTGKRH (66 aa)) is cleaved from the precursor. A disulfide bridge links cysteine 58 with cysteine 104. Asparagine 115, asparagine 157, and asparagine 295 each carry an N-linked (GlcNAc...) asparagine glycan. Cysteine 277 and cysteine 328 are joined by a disulfide. Glutamate 323 serves as the catalytic Proton donor. A critical for hydrolysis GM2 gangliosides region spans residues 423–424 (NR). Cysteines 505 and 522 form a disulfide.

Belongs to the glycosyl hydrolase 20 family. In terms of assembly, there are 3 beta-hexosaminidase isozymes: isozyme A (hexosaminidase A) is a heterodimer composed of one subunit alpha and one subunit beta (chain A and B); isozyme B (hexosaminidase B) is a homodimer of two beta subunits (two chains A and B); isozyme S (hexosaminidase S) is a homodimer of two alpha subunits. The composition of the dimer (isozyme A versus isozyme S) has a significant effect on the substrate specificity of the alpha subunit active site. Post-translationally, N-linked glycan at Asn-115 consists of Man(3)-GlcNAc(2). N-linked glycan at Asn-157 consists of either GlcNAc or GlcNAc(2)-Man(7-9). N-linked glycan at Asn-295 consists of either GlcNAc, GlcNAc-Fuc, or GlcNAc(2)-Man(4).

The protein resides in the lysosome. It catalyses the reaction Hydrolysis of terminal non-reducing N-acetyl-D-hexosamine residues in N-acetyl-beta-D-hexosaminides.. It carries out the reaction N-acetyl-beta-D-galactosaminyl-(1-&gt;4)-beta-D-3-sulfogalactosyl-(1-&gt;4)-beta-D-glucosyl-(1&lt;-&gt;1')-ceramide + H2O = a beta-D-3-sulfogalactosyl-(1-&gt;4)-beta-D-glucosyl-(1&lt;-&gt;1')-ceramide + N-acetyl-beta-D-galactosamine. The enzyme catalyses a ganglioside GM2 (d18:1(4E)) + H2O = a ganglioside GM3 (d18:1(4E)) + N-acetyl-beta-D-galactosamine. The catalysed reaction is a ganglioside GM2 + H2O = a ganglioside GM3 + N-acetyl-beta-D-galactosamine. It catalyses the reaction beta-D-GalNAc-(1-&gt;4)-alpha-L-IdoA-(1-&gt;3)-beta-D-GalNAc-4-sulfate-(1-&gt;4)-alpha-L-IdoA-(1-&gt;3)-D-GalNAc-4-sulfate + H2O = alpha-L-IdoA-(1-&gt;3)-beta-D-GalNAc-4-sulfate-(1-&gt;4)-alpha-L-IdoA-(1-&gt;3)-D-GalNAc-4-sulfate + N-acetyl-D-galactosamine. It carries out the reaction N-acetyl-beta-D-6-sulfogalactosaminyl-(1-&gt;4)-alpha-L-iduronyl-(1-&gt;3)-N-acetyl-D-6-sulfogalactosamine + H2O = alpha-L-iduronyl-(1-&gt;3)-N-acetyl-D-6-sulfogalactosamine + N-acetyl-D-6-sulfogalactosamine. With respect to regulation, addition of GM2A stimulates the hydrolysis of sulfated glycosphingolipid SM2 and the ganglioside GM2. Hydrolyzes the non-reducing end N-acetyl-D-hexosamine and/or sulfated N-acetyl-D-hexosamine of glycoconjugates, such as the oligosaccharide moieties from proteins and neutral glycolipids, or from certain mucopolysaccharides. The isozyme S is as active as the isozyme A on the anionic bis-sulfated glycans, the chondroitin-6-sulfate trisaccharide (C6S-3), and the dermatan sulfate pentasaccharide, and the sulfated glycosphingolipid SM2. The isozyme B does not hydrolyze each of these substrates, however hydrolyzes efficiently neutral oligosaccharide. Only the isozyme A is responsible for the degradation of GM2 gangliosides in the presence of GM2A. The chain is Beta-hexosaminidase subunit alpha from Homo sapiens (Human).